The sequence spans 186 residues: Ribosome-recycling factor (186 aa).

Belongs to the RRF family.

It localises to the cytoplasm. Its function is as follows. Responsible for the release of ribosomes from messenger RNA at the termination of protein biosynthesis. May increase the efficiency of translation by recycling ribosomes from one round of translation to another. The polypeptide is Ribosome-recycling factor (Pelodictyon phaeoclathratiforme (strain DSM 5477 / BU-1)).